We begin with the raw amino-acid sequence, 206 residues long: MKIDVTTLEAKKAGSVDLTDGVFALEPRGDILHRMVAWQLAKRQAGTHKTKGRSEIALTGKKFVKQKGSGGARHGDRKAPQFRGGGKAFGPVVRSHAFDMPKKVRALALKLALSAKAKSDNLVILDEAKLAEPRTKAAKDAFEKLGLKSVLIIDGAELDANFALAARNLPNVDVLPVQGINVYDILRREKLVLTKAAVESLEARFK.

Positions 65–85 (KQKGSGGARHGDRKAPQFRGG) are disordered.

This sequence belongs to the universal ribosomal protein uL4 family. In terms of assembly, part of the 50S ribosomal subunit.

In terms of biological role, one of the primary rRNA binding proteins, this protein initially binds near the 5'-end of the 23S rRNA. It is important during the early stages of 50S assembly. It makes multiple contacts with different domains of the 23S rRNA in the assembled 50S subunit and ribosome. Functionally, forms part of the polypeptide exit tunnel. This is Large ribosomal subunit protein uL4 from Parvibaculum lavamentivorans (strain DS-1 / DSM 13023 / NCIMB 13966).